We begin with the raw amino-acid sequence, 461 residues long: Cysteine--tRNA ligase (461 aa).

Zn(2+) is bound at residue cysteine 28. Residues 30-40 (ITVYDLCHIGH) carry the 'HIGH' region motif. Cysteine 209, histidine 234, and glutamate 238 together coordinate Zn(2+). The 'KMSKS' region signature appears at 266-270 (KMSKS). Lysine 269 contacts ATP.

It belongs to the class-I aminoacyl-tRNA synthetase family. In terms of assembly, monomer. The cofactor is Zn(2+).

Its subcellular location is the cytoplasm. The enzyme catalyses tRNA(Cys) + L-cysteine + ATP = L-cysteinyl-tRNA(Cys) + AMP + diphosphate. This chain is Cysteine--tRNA ligase, found in Shigella flexneri.